Reading from the N-terminus, the 117-residue chain is Large ribosomal subunit protein uL24 (117 aa).

Basic residues predominate over residues 1–10 (MSKQPRKQRK). A disordered region spans residues 1–28 (MSKQPRKQRKALYTAPLHKRHNSMSVHL).

It belongs to the universal ribosomal protein uL24 family. As to quaternary structure, part of the 50S ribosomal subunit.

One of two assembly initiator proteins, it binds directly to the 5'-end of the 23S rRNA, where it nucleates assembly of the 50S subunit. In terms of biological role, located at the polypeptide exit tunnel on the outside of the subunit. This is Large ribosomal subunit protein uL24 from Methanosphaera stadtmanae (strain ATCC 43021 / DSM 3091 / JCM 11832 / MCB-3).